Reading from the N-terminus, the 163-residue chain is NADPH-dependent 7-cyano-7-deazaguanine reductase (163 aa).

A compositionally biased stretch (basic residues) spans 1-10 (MSKPPRRSPR). The disordered stretch occupies residues 1-23 (MSKPPRRSPRKPTPASPELQLGH). The active-site Thioimide intermediate is the Cys61. The Proton donor role is filled by Asp68. Substrate contacts are provided by residues 83-85 (LES) and 102-103 (HE).

Belongs to the GTP cyclohydrolase I family. QueF type 1 subfamily.

Its subcellular location is the cytoplasm. The enzyme catalyses 7-aminomethyl-7-carbaguanine + 2 NADP(+) = 7-cyano-7-deazaguanine + 2 NADPH + 3 H(+). It functions in the pathway tRNA modification; tRNA-queuosine biosynthesis. Functionally, catalyzes the NADPH-dependent reduction of 7-cyano-7-deazaguanine (preQ0) to 7-aminomethyl-7-deazaguanine (preQ1). The sequence is that of NADPH-dependent 7-cyano-7-deazaguanine reductase from Rhodopseudomonas palustris (strain BisA53).